The sequence spans 91 residues: Small ribosomal subunit protein bS16 (91 aa).

It belongs to the bacterial ribosomal protein bS16 family.

In Staphylococcus haemolyticus (strain JCSC1435), this protein is Small ribosomal subunit protein bS16.